A 62-amino-acid polypeptide reads, in one-letter code: Venom peptide SjAPI-2 (62 aa).

5 disulfides stabilise this stretch: C4/C40, C14/C36, C18/C32, C22/C60, and C42/C54. The TIL domain occupies 4–60 (CRISGEVFTWCGTTCPLTCENFRNPPKHCPQGCFVGCMCRRGLVRHRNGRCVRPPRC).

The protein belongs to the serine protease inhibitor-like (TIL domain-containing) family. As to expression, expressed by the venom gland.

It localises to the secreted. In terms of biological role, serine protease inhibitor. The sequence is that of Venom peptide SjAPI-2 from Scorpiops jendeki (Scorpion).